Consider the following 541-residue polypeptide: Exopolysaccharide phosphotransferase SCO6021 (541 aa).

The protein belongs to the stealth family.

This chain is Exopolysaccharide phosphotransferase SCO6021, found in Streptomyces coelicolor (strain ATCC BAA-471 / A3(2) / M145).